A 486-amino-acid chain; its full sequence is Serine/threonine-protein kinase 32C (486 aa).

The segment at 1–56 (MRSGAERRGSSAAASPGSPPPGRARPAGSDAPSALPPPAAGQPRARDSGDVRSQPR) is disordered. Phosphoserine occurs at positions 10, 15, and 18. Over residues 24-33 (ARPAGSDAPS) the composition is skewed to low complexity. The region spanning 93 to 353 (FQILRAIGKG…LQDVQAAPAL (261 aa)) is the Protein kinase domain. Residues 99–107 (IGKGSFGKV) and Lys-122 each bind ATP. Residue Asp-216 is the Proton acceptor of the active site. Basic residues predominate over residues 396–405 (HKKKKRLAKN). 2 disordered regions span residues 396 to 419 (HKKK…QSEN) and 444 to 486 (SQDL…AGSG).

It belongs to the protein kinase superfamily. Ser/Thr protein kinase family. It depends on Mg(2+) as a cofactor.

It catalyses the reaction L-seryl-[protein] + ATP = O-phospho-L-seryl-[protein] + ADP + H(+). The enzyme catalyses L-threonyl-[protein] + ATP = O-phospho-L-threonyl-[protein] + ADP + H(+). The protein is Serine/threonine-protein kinase 32C of Homo sapiens (Human).